Reading from the N-terminus, the 176-residue chain is Shikimate kinase (176 aa).

14–19 contacts ATP; the sequence is GAGKST. Ser-18 lines the Mg(2+) pocket. Substrate is bound by residues Asp-36, Arg-60, and Gly-83. Residue Arg-121 coordinates ATP. A substrate-binding site is contributed by Arg-140.

Belongs to the shikimate kinase family. In terms of assembly, monomer. It depends on Mg(2+) as a cofactor.

Its subcellular location is the cytoplasm. The enzyme catalyses shikimate + ATP = 3-phosphoshikimate + ADP + H(+). Its pathway is metabolic intermediate biosynthesis; chorismate biosynthesis; chorismate from D-erythrose 4-phosphate and phosphoenolpyruvate: step 5/7. Catalyzes the specific phosphorylation of the 3-hydroxyl group of shikimic acid using ATP as a cosubstrate. The protein is Shikimate kinase of Francisella tularensis subsp. tularensis (strain FSC 198).